The chain runs to 298 residues: Mitochondrial 2-oxodicarboxylate carrier (298 aa).

Solcar repeat units follow at residues 10–99 (HETC…YKKF), 106–195 (SPGL…VKDN), and 204–293 (LEFL…TYAW). Transmembrane regions (helical) follow at residues 16–36 (VAAG…LDVV), 69–88 (FGFY…KRAV), 112–132 (PIAG…FEVV), 166–186 (GLNK…MTYF), 204–224 (LEFL…SVFN), and 276–296 (LGPG…WLQE).

The protein belongs to the mitochondrial carrier (TC 2.A.29) family. In terms of tissue distribution, widely expressed.

It is found in the mitochondrion inner membrane. It catalyses the reaction 2-oxoadipate(in) + 2-oxoglutarate(out) = 2-oxoadipate(out) + 2-oxoglutarate(in). The enzyme catalyses hexanedioate(in) + 2-oxoglutarate(out) = hexanedioate(out) + 2-oxoglutarate(in). The catalysed reaction is L-2-aminoadipate(in) + 2-oxoglutarate(out) = L-2-aminoadipate(out) + 2-oxoglutarate(in). It carries out the reaction glutarate(in) + 2-oxoglutarate(out) = glutarate(out) + 2-oxoglutarate(in). It catalyses the reaction 2-oxoheptanedioate(in) + 2-oxoglutarate(out) = 2-oxoheptanedioate(out) + 2-oxoglutarate(in). The enzyme catalyses heptanedioate(in) + 2-oxoglutarate(out) = heptanedioate(out) + 2-oxoglutarate(in). The catalysed reaction is citrate(in) + 2-oxoglutarate(out) = citrate(out) + 2-oxoglutarate(in). Functionally, transports dicarboxylates across the inner membranes of mitochondria by a counter-exchange mechanism. Can transport 2-oxoadipate (2-oxohexanedioate), 2-oxoglutarate, adipate (hexanedioate), glutarate, and to a lesser extent, pimelate (heptanedioate), 2-oxopimelate (2-oxoheptanedioate), 2-aminoadipate (2-aminohexanedioate), oxaloacetate, and citrate. Plays a central role in catabolism of lysine, hydroxylysine, and tryptophan, by transporting common metabolite intermediates (such as 2-oxoadipate) into the mitochondria, where it is converted into acetyl-CoA and can enter the citric acid (TCA) cycle. In Rattus norvegicus (Rat), this protein is Mitochondrial 2-oxodicarboxylate carrier (Slc25a21).